Reading from the N-terminus, the 165-residue chain is Cyclic pyranopterin monophosphate synthase (165 aa).

Substrate contacts are provided by residues 78–80 (LCH) and 116–117 (ME). The active site involves D131.

The protein belongs to the MoaC family. As to quaternary structure, homohexamer; trimer of dimers.

The catalysed reaction is (8S)-3',8-cyclo-7,8-dihydroguanosine 5'-triphosphate = cyclic pyranopterin phosphate + diphosphate. It functions in the pathway cofactor biosynthesis; molybdopterin biosynthesis. Catalyzes the conversion of (8S)-3',8-cyclo-7,8-dihydroguanosine 5'-triphosphate to cyclic pyranopterin monophosphate (cPMP). The sequence is that of Cyclic pyranopterin monophosphate synthase from Sinorhizobium fredii (strain NBRC 101917 / NGR234).